Reading from the N-terminus, the 124-residue chain is Large ribosomal subunit protein bL12 (124 aa).

This sequence belongs to the bacterial ribosomal protein bL12 family. As to quaternary structure, homodimer. Part of the ribosomal stalk of the 50S ribosomal subunit. Forms a multimeric L10(L12)X complex, where L10 forms an elongated spine to which 2 to 4 L12 dimers bind in a sequential fashion. Binds GTP-bound translation factors.

Functionally, forms part of the ribosomal stalk which helps the ribosome interact with GTP-bound translation factors. Is thus essential for accurate translation. The polypeptide is Large ribosomal subunit protein bL12 (Borreliella burgdorferi (strain ATCC 35210 / DSM 4680 / CIP 102532 / B31) (Borrelia burgdorferi)).